The primary structure comprises 194 residues: Cysteine and glycine-rich protein 3 (194 aa).

Positions 1 to 5 (MPNWG) are interaction with TCAP. Positions 10–61 (CGACEKTVYHAEEIQCNGRSFHKTCFHCMACRKALDSTTVAAHESEIYCKVC) constitute an LIM zinc-binding 1 domain. A Nuclear localization signal motif is present at residues 64 to 69 (RRYGPK). The interaction with CLF2 stretch occupies residues 94–106 (QSPKQARSATTSS). S95 and S153 each carry phosphoserine. Positions 120-171 (CPRCGKSVYAAEKVMGGGKPWHKTCFRCAICGKSLESTNVTDKDGELYCKVC) constitute an LIM zinc-binding 2 domain.

In terms of assembly, self-associates. Oligomeric in the cytoplasm and monomeric in the nucleus. Homooligomers preferentially form along the actin cytoskeleton. Interacts with TCAP, LDHD, MYOD1, MYOG, ACTN2, NRAP, MYF6. Interacts (via N-terminus) with GLRX3 (via C-terminus) and PPP3CA; GLRX3 and calcineurin compete for interaction with CSRP3. Interacts with CFL2; the stoichiometry influences F-actin depolymerization and possibly two molecules of CFL2 can interact with one molecule of CSRP3 resulting in the highest functional impact; the interaction is stronger with phosphorylated CFL2.

It localises to the nucleus. The protein resides in the cytoplasm. The protein localises to the cytoskeleton. It is found in the myofibril. Its subcellular location is the sarcomere. It localises to the z line. In terms of biological role, positive regulator of myogenesis. Acts as a cofactor for myogenic bHLH transcription factors such as MYOD1, and probably MYOG and MYF6. Enhances the DNA-binding activity of the MYOD1:TCF3 isoform E47 complex and may promote formation of a functional MYOD1:TCF3 isoform E47:MEF2A complex involved in myogenesis. Plays a crucial and specific role in the organization of cytosolic structures in cardiomyocytes. Could play a role in mechanical stretch sensing. May be a scaffold protein that promotes the assembly of interacting proteins at Z-line structures. It is essential for calcineurin anchorage to the Z line. Required for stress-induced calcineurin-NFAT activation. The role in regulation of cytoskeleton dynamics by association with CFL2 is reported conflictingly. Proposed to contribute to the maintenance of muscle cell integrity through an actin-based mechanism. Can directly bind to actin filaments, cross-link actin filaments into bundles without polarity selectivity and protect them from dilution- and cofilin-mediated depolymerization; the function seems to involve its self-association. In vitro can inhibit PKC/PRKCA activity. Proposed to be involved in cardiac stress signaling by down-regulating excessive PKC/PRKCA signaling. This Bos taurus (Bovine) protein is Cysteine and glycine-rich protein 3 (CSRP3).